A 62-amino-acid chain; its full sequence is Antitoxin VbhA (62 aa).

An Inhibitory (S/T)XXXE(G/N) motif motif is present at residues 20–25 (SQRLEG). An ATP-binding site is contributed by glutamate 24.

Interacts with VbhT.

Antitoxin component of type II toxin-antitoxin (TA) system VbhT-VbhA. Acts by inhibiting the adenylyltransferase activity of VbhT; competes with ATP-binding and prevents productive ATP-binding to VbhT. In Bartonella schoenbuchensis (strain DSM 13525 / NCTC 13165 / R1), this protein is Antitoxin VbhA.